Consider the following 577-residue polypeptide: Arginine--tRNA ligase (577 aa).

Positions 123–133 match the 'HIGH' region motif; sequence PNLAKEMHVGH.

It belongs to the class-I aminoacyl-tRNA synthetase family. Monomer.

The protein resides in the cytoplasm. It catalyses the reaction tRNA(Arg) + L-arginine + ATP = L-arginyl-tRNA(Arg) + AMP + diphosphate. This chain is Arginine--tRNA ligase, found in Marinomonas sp. (strain MWYL1).